Here is a 730-residue protein sequence, read N- to C-terminus: Cyclin-dependent kinase 12 (730 aa).

Disordered regions lie at residues 1–230 (MEIS…APFS) and 246–283 (FSLSSIPPPPPQTDGGASSSKRQDPLPMPPDSKRIATR). Residues 9–21 (THERDRKGSYGHR) are compositionally biased toward basic and acidic residues. Polar residues predominate over residues 57–67 (SISPQYKQRNW). Basic and acidic residues predominate over residues 75–94 (GRDRGRNDFSYRKKGKDYNK). 2 stretches are compositionally biased toward basic residues: residues 95 to 122 (RRDKRSRSRSRHRSPKRSGSSKKSKRRN) and 151 to 163 (KSKKKSRKRRKHS). Over residues 194-203 (FNINPFQPMF) the composition is skewed to low complexity. The span at 204 to 230 (SQPPPPPLPPNSQFMTPPPRPPPAPFS) shows a compositional bias: pro residues. In terms of domain architecture, Protein kinase spans 313–605 (MLDQIGEGTY…AKEALNHPWI (293 aa)). Residues 317 to 325 (IGEGTYGQV), K340, and 398 to 403 (EYVDHD) each bind ATP. D444 functions as the Proton acceptor in the catalytic mechanism. The segment at 623 to 730 (DCHEMWSKKQ…QSQYQSVFFK (108 aa)) is disordered. H625 serves as a coordination point for ATP. The span at 676–688 (NHHHHHHHSHHHA) shows a compositional bias: basic residues. A compositionally biased stretch (polar residues) spans 714–730 (NNHQPVPQSQYQSVFFK).

It belongs to the protein kinase superfamily. CMGC Ser/Thr protein kinase family. CDC2/CDKX subfamily.

It is found in the nucleus. It carries out the reaction [DNA-directed RNA polymerase] + ATP = phospho-[DNA-directed RNA polymerase] + ADP + H(+). The catalysed reaction is L-seryl-[protein] + ATP = O-phospho-L-seryl-[protein] + ADP + H(+). The enzyme catalyses L-threonyl-[protein] + ATP = O-phospho-L-threonyl-[protein] + ADP + H(+). Functionally, cyclin-dependent kinase which displays CTD kinase activity: hyperphosphorylates 'Ser-2' in the C-terminal heptapeptide repeat domain (CTD) of the largest RNA polymerase II subunit, thereby acting as a key regulator of transcription elongation. Required for normal reproduction. This Caenorhabditis elegans protein is Cyclin-dependent kinase 12.